A 421-amino-acid chain; its full sequence is L-Ala-D/L-amino acid epimerase (421 aa).

Substrate-binding positions include Thr-193 and 218–220 (KLK). Mg(2+) contacts are provided by Asp-247, Glu-275, and Asp-304. Substrate contacts are provided by residues Lys-328 and 380 to 382 (DLD).

Belongs to the mandelate racemase/muconate lactonizing enzyme family. Requires Mg(2+) as cofactor.

Catalyzes the epimerization of various hydrophobic and polar dipeptides. Has epimerase activity with L-Ala-L-Ala, L-Ala-L-Ser, L-Ala-L-Thr and L-Ala-L-Trp (in vitro). The chain is L-Ala-D/L-amino acid epimerase from Populus trichocarpa (Western balsam poplar).